The primary structure comprises 155 residues: MNPPAWPASRLFQPVDTVQTLELPRNELLETAMTNSGMQLAGGGVHRTKDIKPEDLVGRGIQLNSYQPPTTRLKPERVFQLAGGSRSSFNPSINTLLTLQPAASVPRSGGIGEVQFVHEFVPSVYFQPFSGPPGSYPDEFIYNFDVATDSIDGYA.

Residues 44 to 84 constitute a propeptide that is removed on maturation; the sequence is GVHRTKDIKPEDLVGRGIQLNSYQPPTTRLKPERVFQLAGG.

Belongs to the adenoviridae hexon-linking protein family. Interacts with the peripentonal hexons as well as the hexons in the facets. Part of a complex composed of the core-capsid bridging protein, the endosome lysis protein VI and the hexon-linking protein VIII; these interactions bridge the virus core to the capsid. Cleaved by the viral protease during virion maturation. May cause the middle segment to be shed from the capsid.

It is found in the virion. The protein resides in the host nucleus. Functionally, structural component of the virion that acts as a cement protein on the capsid interior and which glue the peripentonal hexons and group-of-nine hexons together. The protein is Pre-hexon-linking protein VIII of Bos taurus (Bovine).